A 1358-amino-acid chain; its full sequence is DNA-directed RNA polymerase subunit beta (1358 aa).

A compositionally biased stretch (basic and acidic residues) spans 1033 to 1051 (QGLEDRKKEHEARFDDKKG). A disordered region spans residues 1033-1053 (QGLEDRKKEHEARFDDKKGKL).

Belongs to the RNA polymerase beta chain family. As to quaternary structure, the RNAP catalytic core consists of 2 alpha, 1 beta, 1 beta' and 1 omega subunit. When a sigma factor is associated with the core the holoenzyme is formed, which can initiate transcription.

It catalyses the reaction RNA(n) + a ribonucleoside 5'-triphosphate = RNA(n+1) + diphosphate. Its function is as follows. DNA-dependent RNA polymerase catalyzes the transcription of DNA into RNA using the four ribonucleoside triphosphates as substrates. The chain is DNA-directed RNA polymerase subunit beta from Marinobacter nauticus (strain ATCC 700491 / DSM 11845 / VT8) (Marinobacter aquaeolei).